Consider the following 265-residue polypeptide: Putative pyruvate, phosphate dikinase regulatory protein 2 (265 aa).

Glycine 150 to threonine 157 is a binding site for ADP.

This sequence belongs to the pyruvate, phosphate/water dikinase regulatory protein family. PDRP subfamily.

The enzyme catalyses N(tele)-phospho-L-histidyl/L-threonyl-[pyruvate, phosphate dikinase] + ADP = N(tele)-phospho-L-histidyl/O-phospho-L-threonyl-[pyruvate, phosphate dikinase] + AMP + H(+). It catalyses the reaction N(tele)-phospho-L-histidyl/O-phospho-L-threonyl-[pyruvate, phosphate dikinase] + phosphate + H(+) = N(tele)-phospho-L-histidyl/L-threonyl-[pyruvate, phosphate dikinase] + diphosphate. Bifunctional serine/threonine kinase and phosphorylase involved in the regulation of the pyruvate, phosphate dikinase (PPDK) by catalyzing its phosphorylation/dephosphorylation. The protein is Putative pyruvate, phosphate dikinase regulatory protein 2 of Latilactobacillus sakei subsp. sakei (strain 23K) (Lactobacillus sakei subsp. sakei).